Here is a 475-residue protein sequence, read N- to C-terminus: Ataxin-10 (475 aa).

Arg10 is modified (omega-N-methylarginine). The residue at position 12 (Ser12) is a Phosphoserine; by AURKB. Residue Ser77 is modified to Phosphoserine; by PLK1. Thr82 bears the Phosphothreonine; by PLK1 mark. The residue at position 430 (Ser430) is a Phosphoserine.

Belongs to the ataxin-10 family. As to quaternary structure, homooligomer. Interacts with GNB2. Interacts with IQCB1. Interacts with OGT. In terms of processing, polyubiquitinated. Phosphorylation at Ser-12 by AURKB promotes the association of ATXN10 with PLK1. Phosphorylation at Ser-77 and Thr-82 by PLK1 may play a role in the regulation of cytokinesis and may stimulate the proteasome-mediated degradation of ATXN10. As to expression, expressed in the central nervous system.

The protein resides in the cytoplasm. It is found in the perinuclear region. The protein localises to the midbody. Its subcellular location is the cytoskeleton. It localises to the cilium basal body. The protein resides in the microtubule organizing center. It is found in the centrosome. The protein localises to the centriole. Functionally, may play a role in the regulation of cytokinesis. May play a role in signaling by stimulating protein glycosylation. Induces neuritogenesis by activating the Ras-MAP kinase pathway and is necessary for the survival of cerebellar neurons. Does not appear to play a major role in ciliogenesis. This Homo sapiens (Human) protein is Ataxin-10 (ATXN10).